The sequence spans 279 residues: 3-methyl-2-oxobutanoate hydroxymethyltransferase (279 aa).

Residues aspartate 43 and aspartate 82 each coordinate Mg(2+). Residues 43 to 44 (DS), aspartate 82, and lysine 112 each bind 3-methyl-2-oxobutanoate. Glutamate 114 contributes to the Mg(2+) binding site. The active-site Proton acceptor is glutamate 181.

The protein belongs to the PanB family. In terms of assembly, homodecamer; pentamer of dimers. Mg(2+) serves as cofactor.

The protein resides in the cytoplasm. The catalysed reaction is 3-methyl-2-oxobutanoate + (6R)-5,10-methylene-5,6,7,8-tetrahydrofolate + H2O = 2-dehydropantoate + (6S)-5,6,7,8-tetrahydrofolate. The protein operates within cofactor biosynthesis; (R)-pantothenate biosynthesis; (R)-pantoate from 3-methyl-2-oxobutanoate: step 1/2. Its function is as follows. Catalyzes the reversible reaction in which hydroxymethyl group from 5,10-methylenetetrahydrofolate is transferred onto alpha-ketoisovalerate to form ketopantoate. The sequence is that of 3-methyl-2-oxobutanoate hydroxymethyltransferase from Shouchella clausii (strain KSM-K16) (Alkalihalobacillus clausii).